The chain runs to 458 residues: NADH-quinone oxidoreductase subunit N 1 (458 aa).

14 helical membrane passes run 12–32 (ALIP…AGLL), 37–57 (EVLV…IPSF), 70–90 (FLTI…LLVL), 101–121 (FNES…LVSA), 124–144 (LISF…LVGI), 159–179 (FMLG…IYGA), 199–219 (ILIG…LVPF), 230–250 (APTP…LGAF), 266–286 (SNFL…FALI), 293–313 (MLAY…IVGT), 321–341 (VAYM…VIAF), 361–381 (IAML…GFIV), 393–413 (GFTW…YYYL), and 438–458 (VAIL…LFLI).

The protein belongs to the complex I subunit 2 family. NDH-1 is composed of 14 different subunits. Subunits NuoA, H, J, K, L, M, N constitute the membrane sector of the complex.

It is found in the cell inner membrane. The enzyme catalyses a quinone + NADH + 5 H(+)(in) = a quinol + NAD(+) + 4 H(+)(out). NDH-1 shuttles electrons from NADH, via FMN and iron-sulfur (Fe-S) centers, to quinones in the respiratory chain. The immediate electron acceptor for the enzyme in this species is believed to be ubiquinone. Couples the redox reaction to proton translocation (for every two electrons transferred, four hydrogen ions are translocated across the cytoplasmic membrane), and thus conserves the redox energy in a proton gradient. The chain is NADH-quinone oxidoreductase subunit N 1 from Thermodesulfovibrio yellowstonii (strain ATCC 51303 / DSM 11347 / YP87).